Consider the following 371-residue polypeptide: Queuine tRNA-ribosyltransferase (371 aa).

Asp89 acts as the Proton acceptor in catalysis. Substrate contacts are provided by residues 89–93 (DSGGF), Asp143, Gln185, and Gly212. Residues 243–249 (GVGKPED) form an RNA binding region. The active-site Nucleophile is Asp262. Residues 267–271 (TRNAR) form an RNA binding; important for wobble base 34 recognition region. Residues Cys300, Cys302, Cys305, and His331 each coordinate Zn(2+).

It belongs to the queuine tRNA-ribosyltransferase family. As to quaternary structure, homodimer. Within each dimer, one monomer is responsible for RNA recognition and catalysis, while the other monomer binds to the replacement base PreQ1. Zn(2+) is required as a cofactor.

The catalysed reaction is 7-aminomethyl-7-carbaguanine + guanosine(34) in tRNA = 7-aminomethyl-7-carbaguanosine(34) in tRNA + guanine. It participates in tRNA modification; tRNA-queuosine biosynthesis. Catalyzes the base-exchange of a guanine (G) residue with the queuine precursor 7-aminomethyl-7-deazaguanine (PreQ1) at position 34 (anticodon wobble position) in tRNAs with GU(N) anticodons (tRNA-Asp, -Asn, -His and -Tyr). Catalysis occurs through a double-displacement mechanism. The nucleophile active site attacks the C1' of nucleotide 34 to detach the guanine base from the RNA, forming a covalent enzyme-RNA intermediate. The proton acceptor active site deprotonates the incoming PreQ1, allowing a nucleophilic attack on the C1' of the ribose to form the product. After dissociation, two additional enzymatic reactions on the tRNA convert PreQ1 to queuine (Q), resulting in the hypermodified nucleoside queuosine (7-(((4,5-cis-dihydroxy-2-cyclopenten-1-yl)amino)methyl)-7-deazaguanosine). This chain is Queuine tRNA-ribosyltransferase, found in Pseudomonas putida (strain ATCC 47054 / DSM 6125 / CFBP 8728 / NCIMB 11950 / KT2440).